We begin with the raw amino-acid sequence, 263 residues long: 4-hydroxy-2-oxo-heptane-1,7-dioate aldolase (263 aa).

The Proton acceptor role is filled by His45. Position 147 (Gln147) interacts with substrate. Residue Glu149 participates in a divalent metal cation binding. Substrate contacts are provided by Ala174 and Asp175. Residue Asp175 coordinates a divalent metal cation.

This sequence belongs to the HpcH/HpaI aldolase family. Homohexamer; trimer of dimers. It depends on a divalent metal cation as a cofactor.

The catalysed reaction is 4-hydroxy-2-oxoheptanedioate = succinate semialdehyde + pyruvate. The protein operates within aromatic compound metabolism; 4-hydroxyphenylacetate degradation; pyruvate and succinate semialdehyde from 4-hydroxyphenylacetate: step 7/7. Functionally, catalyzes the reversible retro-aldol cleavage of 4-hydroxy-2-ketoheptane-1,7-dioate (HKHD) to pyruvate and succinic semialdehyde. The protein is 4-hydroxy-2-oxo-heptane-1,7-dioate aldolase of Salmonella paratyphi A (strain ATCC 9150 / SARB42).